The sequence spans 423 residues: GTPase Obg (423 aa).

An Obg domain is found at 1–158 (MFIDTARIYI…MWVRLELKLL (158 aa)). Residues 159-329 (ADVGLIGFPN…LLDKTIEILS (171 aa)) enclose the OBG-type G domain. GTP contacts are provided by residues 165-172 (GFPNAGKS), 190-194 (FTTLT), 211-214 (DIPG), 281-284 (NKID), and 310-312 (SAL). Positions 172 and 192 each coordinate Mg(2+). Positions 346–423 (TPPEEEETLN…VRDFEFEYYE (78 aa)) constitute an OCT domain.

It belongs to the TRAFAC class OBG-HflX-like GTPase superfamily. OBG GTPase family. Monomer. Requires Mg(2+) as cofactor.

The protein localises to the cytoplasm. Its function is as follows. An essential GTPase which binds GTP, GDP and possibly (p)ppGpp with moderate affinity, with high nucleotide exchange rates and a fairly low GTP hydrolysis rate. Plays a role in control of the cell cycle, stress response, ribosome biogenesis and in those bacteria that undergo differentiation, in morphogenesis control. This Thermoanaerobacter pseudethanolicus (strain ATCC 33223 / 39E) (Clostridium thermohydrosulfuricum) protein is GTPase Obg.